Consider the following 311-residue polypeptide: GPN-loop GTPase 2 (311 aa).

20–25 contacts GTP; that stretch reads GSGKTT. Positions 77-79 match the Gly-Pro-Asn (GPN)-loop; involved in dimer interface motif; sequence GPN. 179–182 serves as a coordination point for GTP; it reads SKMD.

Belongs to the GPN-loop GTPase family. As to quaternary structure, heterodimers with gpn1 or gpn3. Binds to RNA polymerase II (RNAPII).

Functionally, small GTPase required for proper localization of RNA polymerase II and III (RNAPII and RNAPIII). May act at an RNAP assembly step prior to nuclear import. In Danio rerio (Zebrafish), this protein is GPN-loop GTPase 2.